Consider the following 224-residue polypeptide: Ankyrin repeat domain-containing protein 45 (224 aa).

ANK repeat units follow at residues 46–76 and 80–109; these read VGRNALFAACMMGRSAIVRELVQNGAADVNE and RGYSPLHCSAMWGQLDTLKTLVELNADFQA.

In terms of tissue distribution, widely expressed.

It localises to the cytoplasm. The protein resides in the midbody. The protein localises to the midbody ring. Its subcellular location is the cleavage furrow. Functionally, may play a role during cell division. The chain is Ankyrin repeat domain-containing protein 45 from Danio rerio (Zebrafish).